A 448-amino-acid polypeptide reads, in one-letter code: uncharacterized protein (448 aa).

Lysine 297 is subject to N6-(pyridoxal phosphate)lysine.

It belongs to the class-III pyridoxal-phosphate-dependent aminotransferase family. Pyridoxal 5'-phosphate serves as cofactor.

This is an uncharacterized protein from Sinorhizobium fredii (strain NBRC 101917 / NGR234).